An 883-amino-acid polypeptide reads, in one-letter code: Translation initiation factor IF-2 (883 aa).

Residues 1–259 (MVDTKTPGDK…GASKQRGRLT (259 aa)) form a disordered region. 2 stretches are compositionally biased toward low complexity: residues 10-22 (KTLT…LTLK) and 77-89 (PRQQ…PQQS). A compositionally biased stretch (basic and acidic residues) spans 113-184 (ARVREIEERK…GDAEPAKKPA (72 aa)). Residues 185–218 (ETSTTTTTAAPARPATTTTRTPTPAGRPPAVAAE) are compositionally biased toward low complexity. Over residues 235–244 (PARPAPPPKQ) the composition is skewed to pro residues. One can recognise a tr-type G domain in the interval 379-548 (PRSPVVTVMG…MIALQAEILE (170 aa)). The G1 stretch occupies residues 388–395 (GHVDHGKT). Position 388–395 (388–395 (GHVDHGKT)) interacts with GTP. A G2 region spans residues 413 to 417 (GITQH). Residues 436 to 439 (DTPG) form a G3 region. Residues 436-440 (DTPGH) and 490-493 (NKID) contribute to the GTP site. The interval 490 to 493 (NKID) is G4. The G5 stretch occupies residues 526–528 (SAK).

This sequence belongs to the TRAFAC class translation factor GTPase superfamily. Classic translation factor GTPase family. IF-2 subfamily.

It is found in the cytoplasm. Its function is as follows. One of the essential components for the initiation of protein synthesis. Protects formylmethionyl-tRNA from spontaneous hydrolysis and promotes its binding to the 30S ribosomal subunits. Also involved in the hydrolysis of GTP during the formation of the 70S ribosomal complex. In Rhodopseudomonas palustris (strain ATCC BAA-98 / CGA009), this protein is Translation initiation factor IF-2.